Consider the following 328-residue polypeptide: V-type sodium ATPase subunit C (328 aa).

This sequence belongs to the V-ATPase V0D/AC39 subunit family.

Involved in ATP-driven sodium extrusion. The chain is V-type sodium ATPase subunit C (ntpC) from Enterococcus hirae (strain ATCC 9790 / DSM 20160 / JCM 8729 / LMG 6399 / NBRC 3181 / NCIMB 6459 / NCDO 1258 / NCTC 12367 / WDCM 00089 / R).